The primary structure comprises 144 residues: Large ribosomal subunit protein uL15 (144 aa).

Residues 20–49 form a disordered region; the sequence is GRGIGSGLGKTGGRGHKGQKSRSGGFHKVG. Positions 21-31 are enriched in gly residues; the sequence is RGIGSGLGKTG.

Belongs to the universal ribosomal protein uL15 family. As to quaternary structure, part of the 50S ribosomal subunit.

Its function is as follows. Binds to the 23S rRNA. The chain is Large ribosomal subunit protein uL15 from Neisseria meningitidis serogroup A / serotype 4A (strain DSM 15465 / Z2491).